We begin with the raw amino-acid sequence, 93 residues long: MAKEELIQFEGLVTEILPDARYRVQLDAGHEIVAYTAGKMKKNRIKTLAGDRVTIEMSPYDLEKGRLIFRHKDERPGGPPRSGPPRGGQFRRR.

The S1-like domain occupies 1–72; sequence MAKEELIQFE…EKGRLIFRHK (72 aa). The disordered stretch occupies residues 70-93; it reads RHKDERPGGPPRSGPPRGGQFRRR.

This sequence belongs to the IF-1 family. As to quaternary structure, component of the 30S ribosomal translation pre-initiation complex which assembles on the 30S ribosome in the order IF-2 and IF-3, IF-1 and N-formylmethionyl-tRNA(fMet); mRNA recruitment can occur at any time during PIC assembly.

The protein localises to the cytoplasm. One of the essential components for the initiation of protein synthesis. Stabilizes the binding of IF-2 and IF-3 on the 30S subunit to which N-formylmethionyl-tRNA(fMet) subsequently binds. Helps modulate mRNA selection, yielding the 30S pre-initiation complex (PIC). Upon addition of the 50S ribosomal subunit IF-1, IF-2 and IF-3 are released leaving the mature 70S translation initiation complex. The protein is Translation initiation factor IF-1 of Nitrobacter winogradskyi (strain ATCC 25391 / DSM 10237 / CIP 104748 / NCIMB 11846 / Nb-255).